The sequence spans 806 residues: 85/88 kDa calcium-independent phospholipase A2 (806 aa).

9 ANK repeats span residues 120 to 147, 151 to 181, 185 to 215, 219 to 248, 251 to 281, 286 to 312, 316 to 345, 349 to 378, and 382 to 403; these read WSVAHLAVELGIRECFHHSRIISCANCA, EGCTPLHLACRKGDGEILVELVQYCHTQMDV, KGETVFHYAVQGDNSQVLQLLGRNAVAGLNQ, QGLTPLHLACQLGKQEMVRVLLLCNARCNI, PNGYPIHSAMKFSQKGCAEMIISMDSSQIHS, YGASPLHWAKNAEMARMLLKRGCNVNS, AGNTALHVAVMRNRFDCAIVLLTHGANADA, HGNTPLHLAMSKDNVEMIKALIVFGAEVDT, and FGETPTFLASKIGRLVTRKAIL. 2 helical membrane passes run 480-500 and 511-531; these read LLCLDGGGVKGLIIIQLLIAI and LFDWVAGTSTGGILALAILHS. One can recognise a PNPLA domain in the interval 481 to 665; that stretch reads LCLDGGGVKG…LANNPTLDAM (185 aa). Positions 485-490 match the GXGXXG motif; the sequence is GGGVKG. Positions 517 to 521 match the GXSXG motif; sequence GTSTG. Serine 519 (nucleophile) is an active-site residue. Aspartate 652 acts as the Proton acceptor in catalysis. The DGA/G signature appears at 652-654; it reads DGG. Residues 677-686 form a calmodulin-binding (1-9-14 motif) region; that stretch reads RKGQANKVKK. A calmodulin-binding (IQ motif) region spans residues 748–759; that stretch reads AWCEMVGIQYFR.

Homodimer formed by catalytic domains tightly interacting through a large hydrophobic interface. The contact area involves 3 alpha helices, several loops and a part of the beta sheet from each monomer. Both active sites of the dimer are in close proximity adopting an open conformation that provide sufficient space for phospholipid access and favoring cooperativity in deacylation-reacylation reactions. Each monomer has 9 ankyrin repeats stacked side-by-side in an elongated structure oriented outwards from the catalytic core. As to expression, four different transcripts were found to be expressed in a distinct tissue distribution.

The protein resides in the cytoplasm. It localises to the cell membrane. It is found in the mitochondrion. The protein localises to the cell projection. Its subcellular location is the pseudopodium. It catalyses the reaction a 1,2-diacyl-sn-glycero-3-phosphocholine + H2O = a 1-acyl-sn-glycero-3-phosphocholine + a fatty acid + H(+). It carries out the reaction a 1-O-alkyl-2-acyl-sn-glycero-3-phosphocholine + H2O = a 1-O-alkyl-sn-glycero-3-phosphocholine + a fatty acid + H(+). The catalysed reaction is 1,2-dihexadecanoyl-sn-glycero-3-phosphocholine + H2O = 1-hexadecanoyl-sn-glycero-3-phosphocholine + hexadecanoate + H(+). The enzyme catalyses 1-hexadecanoyl-2-(9Z-octadecenoyl)-sn-glycero-3-phosphocholine + H2O = 1-hexadecanoyl-sn-glycero-3-phosphocholine + (9Z)-octadecenoate + H(+). It catalyses the reaction 1-hexadecanoyl-2-(9Z,12Z-octadecadienoyl)-sn-glycero-3-phosphocholine + H2O = (9Z,12Z)-octadecadienoate + 1-hexadecanoyl-sn-glycero-3-phosphocholine + H(+). It carries out the reaction 1-hexadecanoyl-2-(5Z,8Z,11Z,14Z-eicosatetraenoyl)-sn-glycero-3-phosphocholine + H2O = 1-hexadecanoyl-sn-glycero-3-phosphocholine + (5Z,8Z,11Z,14Z)-eicosatetraenoate + H(+). The catalysed reaction is 1-octadecanoyl-2-(5Z,8Z,11Z,14Z-eicosatetraenoyl)-sn-glycero-3-phosphocholine + H2O = 1-octadecanoyl-sn-glycero-3-phosphocholine + (5Z,8Z,11Z,14Z)-eicosatetraenoate + H(+). The enzyme catalyses 1-hexadecanoyl-2-(5Z,8Z,11Z,14Z-eicosatetraenoyl)-sn-glycero-3-phosphoethanolamine + H2O = 1-hexadecanoyl-sn-glycero-3-phosphoethanolamine + (5Z,8Z,11Z,14Z)-eicosatetraenoate + H(+). It catalyses the reaction 1,2-dihexadecanoyl-sn-glycero-3-phosphate + H2O = 1-hexadecanoyl-sn-glycero-3-phosphate + hexadecanoate + H(+). It carries out the reaction a 1-acyl-sn-glycero-3-phosphocholine + H2O = sn-glycerol 3-phosphocholine + a fatty acid + H(+). The catalysed reaction is 1-hexadecanoyl-sn-glycero-3-phosphocholine + H2O = sn-glycerol 3-phosphocholine + hexadecanoate + H(+). The enzyme catalyses 1-(5Z,8Z,11Z,14Z-eicosatetraenoyl)-sn-glycero-3-phosphocholine + H2O = sn-glycerol 3-phosphocholine + (5Z,8Z,11Z,14Z)-eicosatetraenoate + H(+). It catalyses the reaction 2-(5Z,8Z,11Z,14Z)-eicosatetraenoyl-sn-glycero-3-phosphocholine + H2O = sn-glycerol 3-phosphocholine + (5Z,8Z,11Z,14Z)-eicosatetraenoate + H(+). It carries out the reaction 1-O-hexadecyl-2-(5Z,8Z,11Z,14Z)-eicosatetraenoyl-sn-glycero-3-phosphocholine + H2O = 1-O-hexadecyl-sn-glycero-3-phosphocholine + (5Z,8Z,11Z,14Z)-eicosatetraenoate + H(+). The catalysed reaction is 1-O-hexadecyl-2-acetyl-sn-glycero-3-phosphocholine + H2O = 1-O-hexadecyl-sn-glycero-3-phosphocholine + acetate + H(+). The enzyme catalyses hexadecanoyl-CoA + H2O = hexadecanoate + CoA + H(+). It catalyses the reaction 1',3'-bis[1,2-di-(9Z-octadecenoyl)-sn-glycero-3-phospho]-glycerol + H2O = 1'-[1,2-di-(9Z-octadecenoyl)-sn-glycero-3-phospho]-3'-[1-(9Z-octadecenoyl)-sn-glycero-3-phospho]-glycerol + (9Z)-octadecenoate + H(+). It carries out the reaction 1'-[1,2-di-(9Z-octadecenoyl)-sn-glycero-3-phospho]-3'-[1-(9Z-octadecenoyl)-sn-glycero-3-phospho]-glycerol + H2O = 1',3'-bis-[1-(9Z-octadecenoyl)-sn-glycero-3-phospho]-glycerol + (9Z)-octadecenoate + H(+). The catalysed reaction is 1',3'-bis-[1,2-di-(9Z,12Z-octadecadienoyl)-sn-glycero-3-phospho]-glycerol + H2O = 1'-[1,2-di-(9Z,12Z-octadecadienoyl)-sn-glycero-3-phospho]-3'-[1-(9Z,12Z-octadecadienoyl)-sn-glycero-3-phospho]-glycerol + (9Z,12Z)-octadecadienoate + H(+). The enzyme catalyses 1-octadecanoyl-2-(15-hydroxy-(5Z,8Z,11Z,13E)-eicosatetraenoyl)-sn-glycero-3-phosphoethanolamine + H2O = 1-octadecanoyl-sn-glycero-3-phosphoethanolamine + 15-hydroxy-(5Z,8Z,11Z,13E)-eicosatetraenoate + H(+). Its activity is regulated as follows. Activated by ATP. Inhibited by calcium-activated calmodulin. Inhibited by bromoenol lactone (BEL). In terms of biological role, calcium-independent phospholipase involved in phospholipid remodeling with implications in cellular membrane homeostasis, mitochondrial integrity and signal transduction. Hydrolyzes the ester bond of the fatty acyl group attached at sn-1 or sn-2 position of phospholipids (phospholipase A1 and A2 activity respectively), producing lysophospholipids that are used in deacylation-reacylation cycles. Hydrolyzes both saturated and unsaturated long fatty acyl chains in various glycerophospholipid classes such as phosphatidylcholines, phosphatidylethanolamines and phosphatidates, with a preference for hydrolysis at sn-2 position. Can further hydrolyze lysophospholipids carrying saturated fatty acyl chains (lysophospholipase activity). Upon oxidative stress, contributes to remodeling of mitochondrial phospholipids in pancreatic beta cells, in a repair mechanism to reduce oxidized lipid content. Preferentially hydrolyzes oxidized polyunsaturated fatty acyl chains from cardiolipins, yielding monolysocardiolipins that can be reacylated with unoxidized fatty acyls to regenerate native cardiolipin species. Hydrolyzes oxidized glycerophosphoethanolamines present in pancreatic islets, releasing oxidized polyunsaturated fatty acids such as hydroxyeicosatetraenoates (HETEs). Has thioesterase activity toward fatty-acyl CoA releasing CoA-SH known to facilitate fatty acid transport and beta-oxidation in mitochondria particularly in skeletal muscle. Plays a role in regulation of membrane dynamics and homeostasis. Selectively hydrolyzes sn-2 arachidonoyl group in plasmalogen phospholipids, structural components of lipid rafts and myelin. Regulates F-actin polymerization at the pseudopods, which is required for both speed and directionality of MCP1/CCL2-induced monocyte chemotaxis. Targets membrane phospholipids to produce potent lipid signaling messengers. Generates lysophosphatidate (LPA, 1-acyl-glycerol-3-phosphate), which acts via G-protein receptors in various cell types. Has phospholipase A2 activity toward platelet-activating factor (PAF, 1-O-alkyl-2-acetyl-sn-glycero-3-phosphocholine), likely playing a role in inactivation of this potent pro-inflammatory signaling lipid. In response to glucose, amplifies calcium influx in pancreatic beta cells to promote INS secretion. Its function is as follows. Lacks the catalytic domain and may act as a negative regulator of the catalytically active isoforms. This chain is 85/88 kDa calcium-independent phospholipase A2 (PLA2G6), found in Homo sapiens (Human).